A 454-amino-acid polypeptide reads, in one-letter code: Tol-Pal system protein TolB (454 aa).

The first 30 residues, Met1–Ala30, serve as a signal peptide directing secretion.

It belongs to the TolB family. As to quaternary structure, the Tol-Pal system is composed of five core proteins: the inner membrane proteins TolA, TolQ and TolR, the periplasmic protein TolB and the outer membrane protein Pal. They form a network linking the inner and outer membranes and the peptidoglycan layer.

It localises to the periplasm. Functionally, part of the Tol-Pal system, which plays a role in outer membrane invagination during cell division and is important for maintaining outer membrane integrity. In Bradyrhizobium diazoefficiens (strain JCM 10833 / BCRC 13528 / IAM 13628 / NBRC 14792 / USDA 110), this protein is Tol-Pal system protein TolB.